Here is a 312-residue protein sequence, read N- to C-terminus: Ribosomal protein L11 methyltransferase (312 aa).

The S-adenosyl-L-methionine site is built by T160, G181, D203, and N246.

This sequence belongs to the methyltransferase superfamily. PrmA family.

It localises to the cytoplasm. It catalyses the reaction L-lysyl-[protein] + 3 S-adenosyl-L-methionine = N(6),N(6),N(6)-trimethyl-L-lysyl-[protein] + 3 S-adenosyl-L-homocysteine + 3 H(+). Methylates ribosomal protein L11. This Staphylococcus carnosus (strain TM300) protein is Ribosomal protein L11 methyltransferase.